Consider the following 319-residue polypeptide: Cobalamin biosynthesis protein CobD (319 aa).

The next 5 helical transmembrane spans lie at 56 to 76 (VMWL…LALA), 78 to 98 (GIHP…ALAG), 153 to 173 (VDGI…LAMA), 204 to 224 (VANF…AVLC), and 296 to 316 (LMWV…YWLV).

The protein belongs to the CobD/CbiB family.

It localises to the cell membrane. Its pathway is cofactor biosynthesis; adenosylcobalamin biosynthesis. In terms of biological role, converts cobyric acid to cobinamide by the addition of aminopropanol on the F carboxylic group. The chain is Cobalamin biosynthesis protein CobD from Klebsiella pneumoniae subsp. pneumoniae (strain ATCC 700721 / MGH 78578).